Reading from the N-terminus, the 201-residue chain is FMN-dependent NADH:quinone oxidoreductase (201 aa).

FMN is bound by residues Ser10, 16 to 18 (SQS), 96 to 99 (MYNF), and 140 to 143 (SRGG).

The protein belongs to the azoreductase type 1 family. Homodimer. FMN is required as a cofactor.

The catalysed reaction is 2 a quinone + NADH + H(+) = 2 a 1,4-benzosemiquinone + NAD(+). The enzyme catalyses N,N-dimethyl-1,4-phenylenediamine + anthranilate + 2 NAD(+) = 2-(4-dimethylaminophenyl)diazenylbenzoate + 2 NADH + 2 H(+). Quinone reductase that provides resistance to thiol-specific stress caused by electrophilic quinones. Its function is as follows. Also exhibits azoreductase activity. Catalyzes the reductive cleavage of the azo bond in aromatic azo compounds to the corresponding amines. In Escherichia coli O6:K15:H31 (strain 536 / UPEC), this protein is FMN-dependent NADH:quinone oxidoreductase.